The chain runs to 642 residues: Threonine--tRNA ligase (642 aa).

In terms of domain architecture, TGS spans 1-61 (MPVITLPDGS…ETDAELSIIT (61 aa)). The tract at residues 243–534 (DHRKIGKQLD…LIEEYAGRFP (292 aa)) is catalytic. Residues cysteine 334, histidine 385, and histidine 511 each contribute to the Zn(2+) site.

It belongs to the class-II aminoacyl-tRNA synthetase family. Homodimer. Requires Zn(2+) as cofactor.

It is found in the cytoplasm. The enzyme catalyses tRNA(Thr) + L-threonine + ATP = L-threonyl-tRNA(Thr) + AMP + diphosphate + H(+). Functionally, catalyzes the attachment of threonine to tRNA(Thr) in a two-step reaction: L-threonine is first activated by ATP to form Thr-AMP and then transferred to the acceptor end of tRNA(Thr). Also edits incorrectly charged L-seryl-tRNA(Thr). This Shewanella baltica (strain OS195) protein is Threonine--tRNA ligase.